The primary structure comprises 179 residues: MDVFGRGRAATADDYRRFLERNSRAAAKLAAATTPTHTASSRQQPEVSARPRHRSLSSRRNSVPHYDPHAGAGGDGQLALSERPSGTLGALAMAAQRRKSIGRPDTPVNAAMGSALRSSQRPRGDVRNPRGEGQTQRGGSRGEANHAQRRQSVTQSTAARQTQPHQGRPRPRRNTLRHM.

Positions 26 to 39 (AAKLAAATTPTHTA) are enriched in low complexity. The interval 26 to 179 (AAKLAAATTP…RPRRNTLRHM (154 aa)) is disordered. The segment covering 150–165 (RQSVTQSTAARQTQPH) has biased composition (polar residues). A compositionally biased stretch (basic residues) spans 167–179 (GRPRPRRNTLRHM).

This is an uncharacterized protein from Equus caballus (Horse).